The sequence spans 968 residues: Serine/threonine-protein kinase apg-1 (968 aa).

In terms of domain architecture, Protein kinase spans 24–329; sequence FVIDQEIGKG…FEDLFNHPVV (306 aa). Residues 30-38 and Lys53 contribute to the ATP site; that span reads IGKGSFAKV. Asp167 functions as the Proton acceptor in the catalytic mechanism. Disordered stretches follow at residues 334 to 500, 528 to 585, 884 to 906, and 939 to 968; these read PGLV…ERAA, MYPQ…LGTS, LPKR…LSDE, and ASKA…SVPA. Basic and acidic residues-rich tracts occupy residues 350 to 361, 371 to 380, and 417 to 431; these read LKEERPVSRAED, LRKDLADREG, and PRED…KEAA. Polar residues-rich tracts occupy residues 441-452, 528-538, and 545-557; these read VQPSTSAPTRPS, MYPQQPQSPKS, and ATQQ…TSGA.

It belongs to the protein kinase superfamily. Ser/Thr protein kinase family. APG1/unc-51/ULK1 subfamily. As to quaternary structure, homodimer. Forms a ternary complex with ATG13 and ATG17.

The protein localises to the cytoplasm. It is found in the preautophagosomal structure membrane. The catalysed reaction is L-seryl-[protein] + ATP = O-phospho-L-seryl-[protein] + ADP + H(+). It catalyses the reaction L-threonyl-[protein] + ATP = O-phospho-L-threonyl-[protein] + ADP + H(+). Serine/threonine protein kinase involved in the cytoplasm to vacuole transport (Cvt) and found to be essential in autophagy, where it is required for the formation of autophagosomes. Involved in the clearance of protein aggregates which cannot be efficiently cleared by the proteasome. Required for selective autophagic degradation of the nucleus (nucleophagy) as well as for mitophagy which contributes to regulate mitochondrial quantity and quality by eliminating the mitochondria to a basal level to fulfill cellular energy requirements and preventing excess ROS production. Also involved in endoplasmic reticulum-specific autophagic process, in selective removal of ER-associated degradation (ERAD) substrates. Plays a key role in ATG9 and ATG23 cycling through the pre-autophagosomal structure and is necessary to promote ATG18 binding to ATG9 through phosphorylation of ATG9. Catalyzes phosphorylation of ATG4, decreasing the interaction between ATG4 and ATG8 and impairing deconjugation of PE-conjugated forms of ATG8. The polypeptide is Serine/threonine-protein kinase apg-1 (Neurospora crassa (strain ATCC 24698 / 74-OR23-1A / CBS 708.71 / DSM 1257 / FGSC 987)).